Reading from the N-terminus, the 541-residue chain is Glucans biosynthesis protein D (541 aa).

A signal peptide (tat-type signal) is located at residues 1 to 29 (MHRRNLLKASMAIAAYTGLSASGLLAAQA).

This sequence belongs to the OpgD/OpgG family. Post-translationally, predicted to be exported by the Tat system. The position of the signal peptide cleavage has not been experimentally proven.

Its subcellular location is the periplasm. Its pathway is glycan metabolism; osmoregulated periplasmic glucan (OPG) biosynthesis. Probably involved in the control of the structural glucose backbone of osmoregulated periplasmic glucans (OPGs). This chain is Glucans biosynthesis protein D, found in Pseudomonas fluorescens (strain SBW25).